We begin with the raw amino-acid sequence, 354 residues long: Guanine nucleotide-binding protein G(t) subunit alpha-2 (354 aa).

The tract at residues 1-28 (MGSGISAEDKELARRSKELEKKLQEDAD) is disordered. Residue glycine 2 is the site of N-myristoyl glycine attachment. Residues 7–28 (AEDKELARRSKELEKKLQEDAD) are compositionally biased toward basic and acidic residues. Residues 32–354 (KTVKLLLLGA…KENLKDCGLF (323 aa)) form the G-alpha domain. The G1 motif stretch occupies residues 35 to 48 (KLLLLGAGESGKST). GTP is bound by residues 40 to 47 (GAGESGKS), 175 to 181 (LRSRVKT), 200 to 204 (DVGGQ), 269 to 272 (NKKD), and alanine 326. The Mg(2+) site is built by serine 47 and threonine 181. Residues 173–181 (DVLRSRVKT) form a G2 motif region. Residues 196–205 (FRMFDVGGQR) are G3 motif. A G4 motif region spans residues 265–272 (VLFLNKKD). The interval 324–329 (TCATDT) is G5 motif.

This sequence belongs to the G-alpha family. G(i/o/t/z) subfamily. In terms of assembly, g proteins are composed of 3 units; alpha, beta and gamma. The alpha chain contains the guanine nucleotide binding site. In terms of tissue distribution, in the retina, expressed in the rod photoreceptors.

The protein resides in the cell projection. Its subcellular location is the cilium. It localises to the photoreceptor outer segment. It is found in the photoreceptor inner segment. Functionally, guanine nucleotide-binding proteins (G proteins) are involved as modulators or transducers in various transmembrane signaling systems. Transducin is an amplifier and one of the transducers of a visual impulse that performs the coupling between rhodopsin and cGMP-phosphodiesterase. This chain is Guanine nucleotide-binding protein G(t) subunit alpha-2 (Gnat2), found in Mus musculus (Mouse).